The primary structure comprises 544 residues: pH-responsive protein 2 (544 aa).

An N-terminal signal peptide occupies residues Met-1–Ala-22. N-linked (GlcNAc...) asparagine glycans are attached at residues Asn-40 and Asn-59. The cysteines at positions 72 and 101 are disulfide-linked. N-linked (GlcNAc...) asparagine glycosylation is present at Asn-147. 5 cysteine pairs are disulfide-bonded: Cys-214–Cys-347, Cys-232–Cys-263, Cys-369–Cys-420, Cys-378–Cys-444, and Cys-397–Cys-402. Asn-408 is a glycosylation site (N-linked (GlcNAc...) asparagine). The interval Gly-469–Lys-514 is disordered. Ser-515 carries the GPI-anchor amidated serine lipid modification. A propeptide spans Ala-516–Met-544 (removed in mature form).

This sequence belongs to the glycosyl hydrolase 72 family.

It is found in the cell membrane. Its function is as follows. Required for apical cell growth and plays an essential role in morphogenesis. May be integral to the pathogenic ability of the organism. This chain is pH-responsive protein 2 (PHR2), found in Candida albicans (strain SC5314 / ATCC MYA-2876) (Yeast).